The primary structure comprises 156 residues: Endoribonuclease YbeY (156 aa).

Zn(2+) is bound by residues His122, His126, and His132.

Belongs to the endoribonuclease YbeY family. Zn(2+) is required as a cofactor.

It localises to the cytoplasm. In terms of biological role, single strand-specific metallo-endoribonuclease involved in late-stage 70S ribosome quality control and in maturation of the 3' terminus of the 16S rRNA. This chain is Endoribonuclease YbeY, found in Moorella thermoacetica (strain ATCC 39073 / JCM 9320).